The sequence spans 729 residues: Pentatricopeptide repeat-containing protein At4g04370 (729 aa).

17 PPR repeats span residues 10 to 44, 45 to 79, 80 to 110, 111 to 145, 178 to 208, 209 to 243, 244 to 278, 279 to 309, 310 to 344, 345 to 379, 380 to 414, 415 to 445, 447 to 481, 482 to 512, 513 to 547, 548 to 583, and 584 to 618; these read STKYFNSHINHLSSHGDHKQVLSTFSSMLANKLLP, DTFTFPSLLKACASLQRLSFGLSIHQQVLVNGFSS, DFYISSSLVNLYAKFGLLAHARKVFEEMRER, DVVHWTAMIGCYSRAGIVGEACSLVNEMRFQGIKP, DIAVMNSMLNLYCKCDHVGDAKDLFDQMEQR, DMVSWNTMISGYASVGNMSEILKLLYRMRGDGLRP, DQQTFGASLSVSGTMCDLEMGRMLHCQIVKTGFDV, DMHLKTALITMYLKCGKEEASYRVLETIPNK, DVVCWTVMISGLMRLGRAEKALIVFSEMLQSGSDL, SSEAIASVVASCAQLGSFDLGASVHGYVLRHGYTL, DTPALNSLITMYAKCGHLDKSLVIFERMNERDLVS, WNAIISGYAQNVDLCKALLLFEEMKFKTVQQ, DSFTVVSLLQACSSAGALPVGKLIHCIVIRSFIRP, CSLVDTALVDMYSKCGYLEAAQRCFDSISWK, DVVSWGILIAGYGFHGKGDIALEIYSEFLHSGMEP, NHVIFLAVLSSCSHNGMVQQGLKIFSSMVRDFGVEP, and NHEHLACVVDLLCRAKRIEDAFKFYKENFTRPSID. A type E motif region spans residues 619-694; the sequence is VLGIILDACR…LPGWSKIEMN (76 aa). Residues 695 to 723 are type E(+) motif; sequence GKTTTFFMNHTSHSDDTVSLLKLLSREMM.

Belongs to the PPR family. PCMP-E subfamily.

This is Pentatricopeptide repeat-containing protein At4g04370 (PCMP-E99) from Arabidopsis thaliana (Mouse-ear cress).